Reading from the N-terminus, the 3059-residue chain is Genome polyprotein (3059 aa).

The 145-residue stretch at G154 to Y298 folds into the Peptidase S30 domain. Catalysis depends on for P1 proteinase activity residues H207, D216, and S249. Residues K349–C352 carry the Involved in interaction with stylet and aphid transmission motif. An Involved in virions binding and aphid transmission motif is present at residues P607–K609. The Peptidase C6 domain occupies M633–G755. Catalysis depends on for helper component proteinase activity residues C641 and H714. Residues Q1226–E1378 enclose the Helicase ATP-binding domain. G1239–S1246 provides a ligand contact to ATP. A DEFH box motif is present at residues D1328–H1331. The Helicase C-terminal domain maps to D1397–T1556. A Nuclear localization signal motif is present at residues K1883 to K1890. Y1905 carries the O-(5'-phospho-RNA)-tyrosine modification. The 219-residue stretch at S2032–D2250 folds into the Peptidase C4 domain. Residues H2077, D2112, and C2182 each act as for nuclear inclusion protein A activity in the active site. A RdRp catalytic domain is found at W2516–L2640. T3042 carries the phosphothreonine modification.

Belongs to the potyviridae genome polyprotein family. Interacts with host eIF4E protein (via cap-binding region); this interaction mediates the translation of the VPg-viral RNA conjugates. Part of a complex that comprises VPg, RNA, host EIF4E and EIF4G; this interaction mediates the translation of the VPg-viral RNA conjugates. Post-translationally, VPg is uridylylated by the polymerase and is covalently attached to the 5'-end of the genomic RNA. This uridylylated form acts as a nucleotide-peptide primer for the polymerase. Phosphorylation inhibits the RNA-binding capacity of the capsid protein. In terms of processing, potyviral RNA is expressed as two polyproteins which undergo post-translational proteolytic processing. Genome polyprotein is processed by NIa-pro, P1 and HC-pro proteinases resulting in the production of at least ten individual proteins. P3N-PIPO polyprotein is cleaved by P1 and HC-pro proteinases resulting in the production of three individual proteins. The P1 proteinase and the HC-pro cleave only their respective C-termini autocatalytically. 6K1 is essential for proper proteolytic separation of P3 from CI.

The protein localises to the host cytoplasmic vesicle. The protein resides in the host nucleus. It localises to the virion. The catalysed reaction is RNA(n) + a ribonucleoside 5'-triphosphate = RNA(n+1) + diphosphate. The enzyme catalyses Hydrolyzes glutaminyl bonds, and activity is further restricted by preferences for the amino acids in P6 - P1' that vary with the species of potyvirus, e.g. Glu-Xaa-Xaa-Tyr-Xaa-Gln-|-(Ser or Gly) for the enzyme from tobacco etch virus. The natural substrate is the viral polyprotein, but other proteins and oligopeptides containing the appropriate consensus sequence are also cleaved.. It catalyses the reaction Hydrolyzes a Gly-|-Gly bond at its own C-terminus, commonly in the sequence -Tyr-Xaa-Val-Gly-|-Gly, in the processing of the potyviral polyprotein.. Its function is as follows. Required for aphid transmission and also has proteolytic activity. Only cleaves a Gly-Gly dipeptide at its own C-terminus. Interacts with virions and aphid stylets. Acts as a suppressor of RNA-mediated gene silencing, also known as post-transcriptional gene silencing (PTGS), a mechanism of plant viral defense that limits the accumulation of viral RNAs. May have RNA-binding activity. Has helicase activity. It may be involved in replication. In terms of biological role, indispensable for virus replication. Reduces the abundance of host transcripts related to jasmonic acid biosynthesis therefore altering the host defenses. In order to increase its own stability, decreases host protein degradation pathways. Functionally, indispensable for virus replication. Its function is as follows. Mediates the cap-independent, EIF4E-dependent translation of viral genomic RNAs. Binds to the cap-binding site of host EIF4E and thus interferes with the host EIF4E-dependent mRNA export and translation. VPg-RNA directly binds EIF4E and is a template for transcription. Also forms trimeric complexes with EIF4E-EIF4G, which are templates for translation. Has RNA-binding and proteolytic activities. In terms of biological role, an RNA-dependent RNA polymerase that plays an essential role in the virus replication. Functionally, involved in aphid transmission, cell-to-cell and systemis movement, encapsidation of the viral RNA and in the regulation of viral RNA amplification. The sequence is that of Genome polyprotein from Potato virus A (PVA).